Consider the following 487-residue polypeptide: Protein translocase subunit SecY (487 aa).

Residues 1 to 20 (MSWKDTAEPLLVRMPAVQRP) lie on the Cytoplasmic side of the membrane. The helical transmembrane segment at 21-47 (EGHVPFKRKLTWTGGVLLLYFFLTNVK) threads the bilayer. Over 48–59 (LFGLDIDASQQV) the chain is Extracellular. An intramembrane region (helical) is located at residues 60 to 67 (FGRFSSIL). Residues 60–88 (FGRFSSILASGQGSIMQLGIGPIVTASIV) form a discontinuously helical membrane-spanning segment. An intramembrane segment occupies 68 to 79 (ASGQGSIMQLGI). The segment at residues 80–88 (GPIVTASIV) is an intramembrane region (helical). Topologically, residues 89 to 110 (LQLLGGADLLGLNTQDDPRDQI) are cytoplasmic. Residues 111–135 (LYQGLQKLLVLVMICLTGLPMVFAG) traverse the membrane as a helical segment. At 136–153 (GFLPADTAVANSLGIGTA) the chain is on the extracellular side. The chain crosses the membrane as a helical span at residues 154–178 (GVQWLIFAQMFVGGVLILFMDEVIS). Residues 179–184 (KWGVGS) lie on the Cytoplasmic side of the membrane. The chain crosses the membrane as a helical span at residues 185-203 (GIGLFIVAGVSQRLVGGLL). The Extracellular portion of the chain corresponds to 204-244 (TAPFLGNSEGIIYTWYLFITGERGTGPVLAADGLQTVLLQG). A helical membrane pass occupies residues 245 to 266 (ELLGLFTTVLIFAVVVYAESVR). Residues 267-291 (VEIPLSNARVKGARGRFPVKLIYAS) lie on the Cytoplasmic side of the membrane. Residues 292–313 (VLPMILVRALQANIQFLGRILN) traverse the membrane as a helical segment. Residues 314–364 (AQLGSMPAFLGTYANGQPTGGLFYFLAPIQSRGDWMWWLEGTAQPVWQILT) lie on the Extracellular side of the membrane. A helical transmembrane segment spans residues 365–384 (RVGIDLFVMLVGGAVFAVFW). At 385-427 (VETTDMGPEATAKQIHNSGMQIPGFRQNVGVIEKVLERYIPQV) the chain is on the cytoplasmic side. The helical transmembrane segment at 428 to 446 (TVIGGALVGLLAVMANMLG) threads the bilayer. The Extracellular segment spans residues 447–451 (TIGGV). The helical transmembrane segment at 452 to 466 (SGTGLLLTVSITYKL) threads the bilayer. Residues 467–487 (YEEIAEEQLMEMHPMMRQMFG) are Cytoplasmic-facing.

This sequence belongs to the SecY/SEC61-alpha family. As to quaternary structure, component of the Sec protein translocase complex. Heterotrimer consisting of alpha (SecY), beta (SecG) and gamma (SecE) subunits. The heterotrimers can form oligomers, although 1 heterotrimer is thought to be able to translocate proteins. Interacts with the ribosome. May interact with SecDF, and other proteins may be involved.

Its subcellular location is the cell membrane. The central subunit of the protein translocation channel SecYEG. Consists of two halves formed by TMs 1-5 and 6-10. These two domains form a lateral gate at the front which open onto the bilayer between TMs 2 and 7, and are clamped together by SecE at the back. The channel is closed by both a pore ring composed of hydrophobic SecY resides and a short helix (helix 2A) on the extracellular side of the membrane which forms a plug. The plug probably moves laterally to allow the channel to open. The ring and the pore may move independently. The sequence is that of Protein translocase subunit SecY from Haloarcula marismortui (strain ATCC 43049 / DSM 3752 / JCM 8966 / VKM B-1809) (Halobacterium marismortui).